The chain runs to 153 residues: Endoribonuclease YbeY (153 aa).

Zn(2+) contacts are provided by H118, H122, and H128.

The protein belongs to the endoribonuclease YbeY family. Zn(2+) is required as a cofactor.

The protein localises to the cytoplasm. Single strand-specific metallo-endoribonuclease involved in late-stage 70S ribosome quality control and in maturation of the 3' terminus of the 16S rRNA. The chain is Endoribonuclease YbeY from Staphylococcus carnosus (strain TM300).